Here is a 448-residue protein sequence, read N- to C-terminus: MSLKRHSLRRNACHLETRAGIPTILYSDATGQRGMDKNIGEQLNRAYEAFRQACMDRDSAVRELQQKQTENYEQRIREQQEQLSFQQNLIDRLKSQLLLVDSSRDNSYGYVPLLEDSDRRKNNLTLDEPHDKVKLGTLRDKQSKVRRQEVSSGKESAKGLNIPLHHERDNIEKTFWDLKEEFHRICLLAKAQKDHLSKLNIPDIATDTQCSVPIQCTDKTEKQEALFKPQAKDDINRGMSCVTAVTPRGLGRDEEDTSFESLSKFNVKFPPMDNDSIFLHSTPEAPSILAPATPETVCQDRFNMEVRDNPGNFVKTEETLFEIQGIDPITSAIQNLKTTDKTNPSNLRATCLPAGDHNVFYVNTFPLQDPPDAPFPSLDSPGKAVRGPQQPFWKPFLNQDTDLVVPSDSDSELLKPLVCEFCQELFPPSITSRGDFLRHLNTHFNGET.

Positions 35-65 (MDKNIGEQLNRAYEAFRQACMDRDSAVRELQ) are necessary for interaction with ZC3H12A. Positions 60–98 (AVRELQQKQTENYEQRIREQQEQLSFQQNLIDRLKSQLL) form a coiled coil. A necessary for interaction with TRAF6 region spans residues 105 to 224 (DNSYGYVPLL…QCTDKTEKQE (120 aa)). Residues 166–205 (HERDNIEKTFWDLKEEFHRICLLAKAQKDHLSKLNIPDIA) form an interaction with TBK1 and IKBKE region. The tract at residues 205–224 (ATDTQCSVPIQCTDKTEKQE) is TRAF family member interaction. At S211 the chain carries Phosphoserine. Position 246 is a phosphothreonine (T246). 4 positions are modified to phosphoserine: S258, S261, S377, and S380. The segment at 416–443 (PLVCEFCQELFPPSITSRGDFLRHLNTH) adopts a UBZ1-type zinc-finger fold. Residues C419, C422, H439, and H443 each coordinate Zn(2+).

Homodimer. Found in a deubiquitination complex with TANK, USP10 and ZC3H12A; this complex inhibits genotoxic stress- or interleukin-1-beta-mediated NF-kappaB activation by promoting IKBKG or TRAF6 deubiquitination. Interacts with IKBKG; this interaction increases in response to DNA damage. Interacts with TRAF6; this interaction increases in response to DNA damage and recruits USP10 to the ubiquitinated TRAF6. Interacts with USP10; this interaction increases in response to DNA damage. Interacts with TBK1 and IKBKE. Also interacts with TRAF1, TRAF2, and TRAF3 by binding to their TRAF-C domains; the interaction with TRAF2 is disrupted by the phosphorylation of TANK by IKBKE. Interacts more strongly with TRAF1 and TRAF2 than TRAF3. Part of a ternary complex consisting of TANK, IKBKB and IKBKG. Interacts with IKBKG; the interaction is enhanced by IKBKE and TBK1. As to expression, heart, brain, spleen, lung, liver, skeletal muscle, kidney and testis.

Its subcellular location is the cytoplasm. Its function is as follows. Adapter protein involved in I-kappa-B-kinase (IKK) regulation which constitutively binds TBK1 and IKBKE playing a role in antiviral innate immunity. Acts as a regulator of TRAF function by maintaining them in a latent state. Blocks TRAF2 binding to LMP1 and inhibits LMP1-mediated NF-kappa-B activation. Negatively regulates NF-kappaB signaling and cell survival upon DNA damage. Plays a role as an adapter to assemble ZC3H12A, USP10 in a deubiquitination complex which plays a negative feedback response to attenuate NF-kappaB activation through the deubiquitination of IKBKG or TRAF6 in response to interleukin-1-beta (IL1B) stimulation or upon DNA damage. Promotes UBP10-induced deubiquitination of TRAF6 in response to DNA damage. May control negatively TRAF2-mediated NF-kappa-B activation signaled by CD40, TNFR1 and TNFR2. Essential for the efficient induction of IRF-dependent transcription following infection with Sendai virus. The sequence is that of TRAF family member-associated NF-kappa-B activator (Tank) from Mus musculus (Mouse).